The following is a 325-amino-acid chain: DNA repair and recombination protein RadA (325 aa).

107–114 (GEFGSGKT) contacts ATP.

It belongs to the eukaryotic RecA-like protein family.

Functionally, involved in DNA repair and in homologous recombination. Binds and assemble on single-stranded DNA to form a nucleoprotein filament. Hydrolyzes ATP in a ssDNA-dependent manner and promotes DNA strand exchange between homologous DNA molecules. The protein is DNA repair and recombination protein RadA of Methanococcoides burtonii (strain DSM 6242 / NBRC 107633 / OCM 468 / ACE-M).